A 112-amino-acid chain; its full sequence is UPF0482 protein SG1468 (112 aa).

Positions Met-1–Ala-22 are cleaved as a signal peptide.

It belongs to the UPF0482 family.

The protein is UPF0482 protein SG1468 of Sodalis glossinidius (strain morsitans).